The primary structure comprises 264 residues: 5'-nucleotidase SurE (264 aa).

Positions 10, 11, 43, and 99 each coordinate a divalent metal cation.

Belongs to the SurE nucleotidase family. It depends on a divalent metal cation as a cofactor.

Its subcellular location is the cytoplasm. It catalyses the reaction a ribonucleoside 5'-phosphate + H2O = a ribonucleoside + phosphate. In terms of biological role, nucleotidase that shows phosphatase activity on nucleoside 5'-monophosphates. This chain is 5'-nucleotidase SurE, found in Methanococcus maripaludis (strain C6 / ATCC BAA-1332).